Reading from the N-terminus, the 445-residue chain is D-serine transporter DsdX (445 aa).

Over 1–4 (MHSQ) the chain is Cytoplasmic. Residues 5–25 (IWVVSTLLISIVLIVLTIVKF) traverse the membrane as a helical segment. Residues 26-28 (KFH) lie on the Periplasmic side of the membrane. Residues 29–49 (PFLALLLASFFVGTMMGMGPL) traverse the membrane as a helical segment. The Cytoplasmic portion of the chain corresponds to 50-56 (DMVNAIE). Residues 57-77 (SGIGGTLGFLAAVIGLGTILG) traverse the membrane as a helical segment. Topologically, residues 78-105 (KMMEVSGAAERIGLTLQRCRWLSVDVIM) are periplasmic. A helical transmembrane segment spans residues 106-126 (VLVGLICGITLFVEVGVVLLI). At 127–139 (PLAFSIAKKTNTS) the chain is on the cytoplasmic side. The chain crosses the membrane as a helical span at residues 140–160 (LLKLAIPLCTALMAVHCVVPP). Over 161 to 177 (HPAALYVANKLGADIGS) the chain is Periplasmic. Residues 178–198 (VIVYGLLVGLMASLIGGPLFL) traverse the membrane as a helical segment. Topologically, residues 199 to 223 (KFLGQRLPFKPVPTEFADLKVRDEK) are cytoplasmic. The helical transmembrane segment at 224-244 (TLPSLGATLFTILLPIALMLV) threads the bilayer. Over 245-257 (KTIAELNMARESG) the chain is Periplasmic. Residues 258–278 (LYILVEFIGNPITAMFIAVFV) form a helical membrane-spanning segment. Residues 279 to 301 (AYYVLGIRQHMSMGTMLTHTENG) are Cytoplasmic-facing. Residues 302–322 (FGSIANILLIIGAGGAFNAIL) traverse the membrane as a helical segment. The Periplasmic portion of the chain corresponds to 323–342 (KSSSLADTLAVILSNMHMHP). The next 3 helical transmembrane spans lie at 343–363 (ILLA…ATVA), 364–384 (MMGA…ISPE), and 385–405 (IIAI…DSLF). The Cytoplasmic segment spans residues 406 to 424 (WLVKQYCGATLNETFKYYT). Residues 425–445 (TATFIASVVALAGTFLLSFII) form a helical membrane-spanning segment.

The protein belongs to the GntP permease family.

Its subcellular location is the cell inner membrane. A D-serine-specific transporter, may function as a H(+) symporter. This Escherichia coli (strain K12) protein is D-serine transporter DsdX.